Here is a 349-residue protein sequence, read N- to C-terminus: Peroxidase C3 (349 aa).

The N-terminal stretch at 1–29 (MGFSPLISCSAMGALILSCLLLQASNSNA) is a signal peptide. 4 disulfide bridges follow: C40-C120, C73-C78, C126-C329, and C206-C238. The active-site Proton acceptor is the H71. D72, V75, G77, D79, and S81 together coordinate Ca(2+). N86 carries an N-linked (GlcNAc...) asparagine glycan. Position 168 (P168) interacts with substrate. Residue H199 coordinates heme b. Residue T200 coordinates Ca(2+). 2 N-linked (GlcNAc...) asparagine glycosylation sites follow: N217 and N243. 3 residues coordinate Ca(2+): D251, T254, and D259.

The protein belongs to the peroxidase family. Classical plant (class III) peroxidase subfamily. Ca(2+) is required as a cofactor. Requires heme b as cofactor.

The protein resides in the secreted. It localises to the vacuole. It catalyses the reaction 2 a phenolic donor + H2O2 = 2 a phenolic radical donor + 2 H2O. Removal of H(2)O(2), oxidation of toxic reductants, biosynthesis and degradation of lignin, suberization, auxin catabolism, response to environmental stresses such as wounding, pathogen attack and oxidative stress. These functions might be dependent on each isozyme/isoform in each plant tissue. This chain is Peroxidase C3 (PRXC3), found in Armoracia rusticana (Horseradish).